We begin with the raw amino-acid sequence, 259 residues long: Probable WRKY transcription factor 65 (259 aa).

Over residues 1–17 the composition is skewed to basic and acidic residues; sequence MKRGLDMARSYNDHESS. Disordered regions lie at residues 1 to 101 and 126 to 165; these read MKRG…RCSS and TSEH…EEED. Residues 18-31 show a composition bias toward polar residues; the sequence is QETGPESPNSSTFN. The span at 47–69 shows a compositional bias: basic and acidic residues; it reads RSVEKRVVNVPMKEMEGSRHKGD. The segment at residues 68–134 is a DNA-binding region (WRKY); it reads GDTTPPSDSW…YTSEHNHPWP (67 aa). Over residues 154-165 the composition is skewed to acidic residues; the sequence is EPEVEPEAEEED.

It is found in the nucleus. Its function is as follows. Transcription factor. Interacts specifically with the W box (5'-(T)TGAC[CT]-3'), a frequently occurring elicitor-responsive cis-acting element. The polypeptide is Probable WRKY transcription factor 65 (WRKY65) (Arabidopsis thaliana (Mouse-ear cress)).